The following is a 301-amino-acid chain: Coiled-coil domain-containing protein 50 (301 aa).

A coiled-coil region spans residues 57-131 (QVAKQLQEEE…LQEEKKRKKH (75 aa)). Composition is skewed to basic and acidic residues over residues 123–142 (QEEK…KVYE), 161–175 (VYDK…SDAE), and 214–262 (AFKK…DKSS). 2 disordered regions span residues 123-175 (QEEK…SDAE) and 214-301 (AFKK…RRKQ).

In terms of processing, phosphorylated on tyrosine residues.

In terms of biological role, involved in EGFR signaling. The protein is Coiled-coil domain-containing protein 50 (CCDC50) of Gallus gallus (Chicken).